Reading from the N-terminus, the 193-residue chain is dCTP deaminase (193 aa).

DCTP-binding positions include 110–115 (RSSLAR), Asp128, 136–138 (VLE), Tyr171, Lys178, and Gln182. Residue Glu138 is the Proton donor/acceptor of the active site. The disordered stretch occupies residues 169 to 193 (RPYNSRQDAKYRGQQGAVASRIDKD).

This sequence belongs to the dCTP deaminase family. In terms of assembly, homotrimer.

It carries out the reaction dCTP + H2O + H(+) = dUTP + NH4(+). It participates in pyrimidine metabolism; dUMP biosynthesis; dUMP from dCTP (dUTP route): step 1/2. In terms of biological role, catalyzes the deamination of dCTP to dUTP. In Yersinia pestis bv. Antiqua (strain Antiqua), this protein is dCTP deaminase.